Consider the following 447-residue polypeptide: Tubulin beta-2 chain (447 aa).

Residues glutamine 11, glutamate 69, serine 138, glycine 142, threonine 143, glycine 144, asparagine 204, and asparagine 226 each contribute to the GTP site. Glutamate 69 lines the Mg(2+) pocket. The disordered stretch occupies residues 427–447 (DASISEGEEEYEEEQQLENEE). Positions 432-447 (EGEEEYEEEQQLENEE) are enriched in acidic residues.

This sequence belongs to the tubulin family. In terms of assembly, dimer of alpha and beta chains. A typical microtubule is a hollow water-filled tube with an outer diameter of 25 nm and an inner diameter of 15 nM. Alpha-beta heterodimers associate head-to-tail to form protofilaments running lengthwise along the microtubule wall with the beta-tubulin subunit facing the microtubule plus end conferring a structural polarity. Microtubules usually have 13 protofilaments but different protofilament numbers can be found in some organisms and specialized cells. It depends on Mg(2+) as a cofactor.

It localises to the cytoplasm. It is found in the cytoskeleton. Functionally, tubulin is the major constituent of microtubules, a cylinder consisting of laterally associated linear protofilaments composed of alpha- and beta-tubulin heterodimers. Microtubules grow by the addition of GTP-tubulin dimers to the microtubule end, where a stabilizing cap forms. Below the cap, tubulin dimers are in GDP-bound state, owing to GTPase activity of alpha-tubulin. This chain is Tubulin beta-2 chain (TUB2), found in Erysiphe pisi (Pea powdery mildew).